The sequence spans 125 residues: MORF4 family-associated protein 1 (125 aa).

The interval 76 to 99 is disordered; it reads ESALNHLQGAGGAEPRGPRAEKAD. Positions 94 to 124 form a coiled coil; the sequence is RAEKADEKAQEMAKMAEMLVQLVRRIEKSES.

This sequence belongs to the MORF4 family-associated protein family. Found in a complex composed of MORF4L1, MRFAP1 and RB1. Interacts via its N-terminus with MORF4L1. Interacts with CSTB and MORF4L2. As to expression, widely expressed in all tissues examined and as early as 7 days during embryonic development.

Its subcellular location is the nucleus. The protein resides in the cytoplasm. It is found in the perinuclear region. In Mus musculus (Mouse), this protein is MORF4 family-associated protein 1.